We begin with the raw amino-acid sequence, 685 residues long: DNA topoisomerase 4 subunit B (685 aa).

Residues 389 to 400 (EAARKAREESRN) are compositionally biased toward basic and acidic residues. A disordered region spans residues 389–427 (EAARKAREESRNGKKRKKGESLLSGKLTPAQSRNPKKNE). Positions 426-540 (NELYLVEGDS…AGKVYIALPP (115 aa)) constitute a Toprim domain. 3 residues coordinate Mg(2+): glutamate 432, aspartate 505, and aspartate 507. Acidic residues-rich tracts occupy residues 644–654 (GSILDRSEEDT) and 673–685 (QTDD…FDIE). Residues 644–685 (GSILDRSEEDTSAPTGESLLDAEKTKEAEQTDDTEISLFDIE) form a disordered region.

This sequence belongs to the type II topoisomerase family. ParE type 1 subfamily. As to quaternary structure, heterotetramer composed of ParC and ParE. Mg(2+) serves as cofactor. Mn(2+) is required as a cofactor. It depends on Ca(2+) as a cofactor.

The enzyme catalyses ATP-dependent breakage, passage and rejoining of double-stranded DNA.. With respect to regulation, pyrrolopyrimidines inhibit both GyrB and its paralog in topoisomerase IV (parE). Functionally, topoisomerase IV is essential for chromosome segregation. It relaxes supercoiled DNA. Performs the decatenation events required during the replication of a circular DNA molecule. This is DNA topoisomerase 4 subunit B from Enterococcus faecalis (strain ATCC 700802 / V583).